The chain runs to 616 residues: Spastin (616 aa).

Residues 1-43 (MNSPGGRGKKKGSGGASNPVPPRPPPPCLAPAPPAAGPAPPPE) are disordered. Residues 1–50 (MNSPGGRGKKKGSGGASNPVPPRPPPPCLAPAPPAAGPAPPPESPHKRNL) form a required for nuclear localization region. Over 1-56 (MNSPGGRGKKKGSGGASNPVPPRPPPPCLAPAPPAAGPAPPPESPHKRNLYYFSYP) the chain is Cytoplasmic. The interval 1–80 (MNSPGGRGKK…LGLLFVWLCQ (80 aa)) is required for interaction with ATL1. A required for midbody localization region spans residues 1–194 (MNSPGGRGKK…LVMAKDRLQL (194 aa)). The tract at residues 1 to 300 (MNSPGGRGKK…GTPKTNRTNK (300 aa)) is required for interaction with RTN1. The Nuclear localization signal motif lies at 4–11 (PGGRGKKK). Residues 19 to 43 (PVPPRPPPPCLAPAPPAAGPAPPPE) are compositionally biased toward pro residues. Residues 50–87 (LYYFSYPLFVGFALLRLVAFHLGLLFVWLCQRFSRALM) are required for interaction with SSNA1 and microtubules. An intramembrane region (helical) is located at residues 57-77 (LFVGFALLRLVAFHLGLLFVW). Residues 59 to 67 (VGFALLRLV) carry the Nuclear export signal motif. The Cytoplasmic segment spans residues 78–616 (LCQRFSRALM…WNKDFGDTTV (539 aa)). The sufficient for interaction with CHMP1B stretch occupies residues 112–196 (EAERVRVFHK…MAKDRLQLLE (85 aa)). A required for interaction with microtubules region spans residues 114-200 (ERVRVFHKQA…RLQLLEKMQP (87 aa)). The 76-residue stretch at 120-195 (HKQAFEYISI…VMAKDRLQLL (76 aa)) folds into the MIT domain. The interval 224–266 (HLQSESGAVPKRKDPLTHTSNSLPRSKTVMKTGSAGLSGHHRA) is disordered. Residues 228-616 (ESGAVPKRKD…WNKDFGDTTV (389 aa)) form a sufficient for microtubule severing region. Residues 240 to 254 (THTSNSLPRSKTVMK) are compositionally biased toward polar residues. Phosphoserine is present on residues Ser245 and Ser268. The segment at 270–328 (SGLSMVSGVKQGSGPAPTTHKGTPKTNRTNKPSTPTTATRKKKDLKNFRNVDSNLANLI) is required for interaction with microtubules and microtubule severing. The tract at residues 278–312 (VKQGSGPAPTTHKGTPKTNRTNKPSTPTTATRKKK) is disordered. Polar residues predominate over residues 289 to 307 (HKGTPKTNRTNKPSTPTTA). Residue Thr306 is modified to Phosphothreonine. The short motif at 309 to 312 (RKKK) is the Nuclear localization signal element. Residues 310 to 312 (KKK) are required for interaction with microtubules. Position 382-389 (382-389 (GPPGNGKT)) interacts with ATP. Ser597 carries the post-translational modification Phosphoserine.

This sequence belongs to the AAA ATPase family. Spastin subfamily. As to quaternary structure, homohexamer. Mostly monomeric, but assembles into hexameric structure for short periods of time. Oligomerization seems to be a prerequisite for catalytic activity. Binding to ATP in a cleft between two adjacent subunits stabilizes the homohexameric form. Binds to microtubules at least in part via the alpha-tubulin and beta-tubulin tails. The hexamer adopts a ring conformation through which microtubules pass prior to being severed. Does not interact strongly with tubulin heterodimers. Interacts (via MIT domain) with CHMP1B; the interaction is direct. Interacts with SSNA1. Interacts with ATL1. Interacts with RTN1. Interacts with ZFYVE27. Isoform 1 but not isoform 3 interacts with RTN2. Interacts with REEP1. Interacts (via MIT domain) with IST1. Expressed in brain, heart, kidney, liver, lung, pancreas, placenta and skeletal muscle. The short isoforms may predominate in brain and spinal cord.

Its subcellular location is the membrane. The protein resides in the endoplasmic reticulum. It is found in the midbody. The protein localises to the cytoplasm. It localises to the cytoskeleton. Its subcellular location is the microtubule organizing center. The protein resides in the centrosome. It is found in the perinuclear region. The protein localises to the nucleus. It localises to the spindle. Its subcellular location is the cell projection. The protein resides in the axon. It is found in the endoplasmic reticulum membrane. The protein localises to the nucleus membrane. It localises to the lipid droplet. Its subcellular location is the endosome. It catalyses the reaction n ATP + n H2O + a microtubule = n ADP + n phosphate + (n+1) alpha/beta tubulin heterodimers.. With respect to regulation, allosteric enzyme with a cooperative mechanism; at least two neighbor subunits influence each other strongly in spastin hexamers. Microtubule binding promotes cooperative interactions among spastin subunits. ATP-bound enzyme interacts strongly and cooperatively with microtubules; this interaction stimulates ATP hydrolysis. ATP-dependent microtubule severing protein that specifically recognizes and cuts microtubules that are polyglutamylated. Preferentially recognizes and acts on microtubules decorated with short polyglutamate tails: severing activity increases as the number of glutamates per tubulin rises from one to eight, but decreases beyond this glutamylation threshold. Severing activity is not dependent on tubulin acetylation or detyrosination. Microtubule severing promotes reorganization of cellular microtubule arrays and the release of microtubules from the centrosome following nucleation. It is critical for the biogenesis and maintenance of complex microtubule arrays in axons, spindles and cilia. SPAST is involved in abscission step of cytokinesis and nuclear envelope reassembly during anaphase in cooperation with the ESCRT-III complex. Recruited at the midbody, probably by IST1, and participates in membrane fission during abscission together with the ESCRT-III complex. Recruited to the nuclear membrane by IST1 and mediates microtubule severing, promoting nuclear envelope sealing and mitotic spindle disassembly during late anaphase. Required for membrane traffic from the endoplasmic reticulum (ER) to the Golgi and endosome recycling. Recruited by IST1 to endosomes and regulates early endosomal tubulation and recycling by mediating microtubule severing. Probably plays a role in axon growth and the formation of axonal branches. In terms of biological role, involved in lipid metabolism by regulating the size and distribution of lipid droplets. This Homo sapiens (Human) protein is Spastin.